A 132-amino-acid polypeptide reads, in one-letter code: Small ribosomal subunit protein uS8 (132 aa).

Belongs to the universal ribosomal protein uS8 family. Part of the 30S ribosomal subunit. Contacts proteins S5 and S12.

Its function is as follows. One of the primary rRNA binding proteins, it binds directly to 16S rRNA central domain where it helps coordinate assembly of the platform of the 30S subunit. This Mycobacterium leprae (strain Br4923) protein is Small ribosomal subunit protein uS8.